A 310-amino-acid polypeptide reads, in one-letter code: Probable cell division protein WhiA (310 aa).

Positions 277–310 form a DNA-binding region, H-T-H motif; that stretch reads SLKELAEQVPDGPISKSGVNHRLKKLHEIAENLR.

This sequence belongs to the WhiA family.

Functionally, involved in cell division and chromosome segregation. The sequence is that of Probable cell division protein WhiA from Lactobacillus delbrueckii subsp. bulgaricus (strain ATCC BAA-365 / Lb-18).